The primary structure comprises 209 residues: MKAVVQRVTRASVTVGGEQISAIGRGICVLLGISLEDTQKELEHMVRKILNLRVFEDESGKHWSKSVMDKQYEVLCVSQFTLQCVLKGNKPDFHLAMPAEQAESFYKGFLEQLRKAYRPELVKDGKFGAYMQVHIQNDGPVTIELESPAPGAAASDPKQLSKLEKQQQRKEKTRAKGPSESSKERSAPRKEDRSASSGAEGDVSSEREP.

Mg(2+) is bound by residues Val-4, Gln-6, and Cys-28. Positions 139-140 (GP) match the Gly-cisPro motif, important for rejection of L-amino acids motif. The segment at 142–209 (TIELESPAPG…EGDVSSEREP (68 aa)) is disordered. Composition is skewed to basic and acidic residues over residues 159–170 (QLSKLEKQQQRK) and 181–194 (SSKE…EDRS). Ser-197, Ser-204, and Ser-205 each carry phosphoserine.

The protein belongs to the DTD family. In terms of assembly, homodimer. Interacts with CDC45 and TOPBP1. In terms of processing, preferentially phosphorylated in cells arrested early in S phase. Phosphorylation in the C-terminus weakens the interaction with CDC45.

The protein localises to the nucleus. It localises to the cytoplasm. The catalysed reaction is glycyl-tRNA(Ala) + H2O = tRNA(Ala) + glycine + H(+). It carries out the reaction a D-aminoacyl-tRNA + H2O = a tRNA + a D-alpha-amino acid + H(+). An aminoacyl-tRNA editing enzyme that deacylates mischarged D-aminoacyl-tRNAs. Also deacylates mischarged glycyl-tRNA(Ala), protecting cells against glycine mischarging by AlaRS. Acts via tRNA-based rather than protein-based catalysis; rejects L-amino acids rather than detecting D-amino acids in the active site. By recycling D-aminoacyl-tRNA to D-amino acids and free tRNA molecules, this enzyme counteracts the toxicity associated with the formation of D-aminoacyl-tRNA entities in vivo and helps enforce protein L-homochirality. Functionally, ATPase involved in DNA replication, may facilitate loading of CDC45 onto pre-replication complexes. The protein is D-aminoacyl-tRNA deacylase 1 (DTD1) of Bos taurus (Bovine).